The following is a 133-amino-acid chain: Fatty acid-binding protein (133 aa).

It belongs to the calycin superfamily. Fatty-acid binding protein (FABP) family.

The chain is Fatty acid-binding protein from Clonorchis sinensis (Chinese liver fluke).